Here is a 268-residue protein sequence, read N- to C-terminus: Tryptophan synthase alpha chain (268 aa).

Residues Glu49 and Asp60 each act as proton acceptor in the active site.

It belongs to the TrpA family. As to quaternary structure, tetramer of two alpha and two beta chains.

It catalyses the reaction (1S,2R)-1-C-(indol-3-yl)glycerol 3-phosphate + L-serine = D-glyceraldehyde 3-phosphate + L-tryptophan + H2O. It functions in the pathway amino-acid biosynthesis; L-tryptophan biosynthesis; L-tryptophan from chorismate: step 5/5. In terms of biological role, the alpha subunit is responsible for the aldol cleavage of indoleglycerol phosphate to indole and glyceraldehyde 3-phosphate. This Serratia proteamaculans (strain 568) protein is Tryptophan synthase alpha chain.